The following is a 357-amino-acid chain: MGDHNLPDFQTCLKFSVTAKKSFLCMYRDSVSKEKLASSMPSTCDIQLKRAINDAYPGGGIKVTVLNSTTASLDSLATTHVKEFEIVIIPDINSLLQPDQAKLVKIMRDCTVAIEKAQSTRIFIGVVHWNNPVQPSGAAKDGDEAGKPAPKTRIFLPTSFRMGAWLKHKFWFACAPPYLDFESSTESSINTRANNSIGMAEEEKQEPESKRSIILNEEANLNDVFVGSTVRRYILDIMVHLRTHRLTYNAKAGGVYTNSLDDVVLLSRLIGLHSGKMFVSPSHVKEASRWYFPMHLELVQRSSMDSSLLYGSDPNLVDEMLEKLAKIKCEEVNEFENPLFLESLVVKNVLSKVVPPV.

It belongs to the MTC2 family.

In terms of biological role, may be involved in telomere capping. In Saccharomyces cerevisiae (strain YJM789) (Baker's yeast), this protein is Maintenance of telomere capping protein 2 (MTC2).